Consider the following 438-residue polypeptide: Beta-1,3-galactosyl-O-glycosyl-glycoprotein beta-1,6-N-acetylglucosaminyltransferase 3 (438 aa).

The Cytoplasmic segment spans residues 1–6; sequence MVQWKR. The chain crosses the membrane as a helical; Signal-anchor for type II membrane protein span at residues 7 to 26; the sequence is LCQLHYLWALGCYMLLATVA. The Lumenal segment spans residues 27-438; sequence LKLSFRLKCD…RYKAIYGTEL (412 aa). 4 disulfides stabilise this stretch: Cys-70–Cys-227, Cys-161–Cys-382, Cys-182–Cys-209, and Cys-391–Cys-423. An N-linked (GlcNAc...) asparagine glycan is attached at Asn-289.

The protein belongs to the glycosyltransferase 14 family. Post-translationally, N-glycosylated. As to expression, primarily expressed in mucus-secreting tissues. Expressed in colon, kidney, small intestine, trachea, and stomach, where mucin is produced.

The protein resides in the golgi apparatus membrane. The catalysed reaction is a 3-O-[beta-D-galactosyl-(1-&gt;3)-N-acetyl-alpha-D-galactosaminyl]-L-seryl-[protein] + UDP-N-acetyl-alpha-D-glucosamine = 3-O-{beta-D-galactosyl-(1-&gt;3)-[N-acetyl-beta-D-glucosaminyl-(1-&gt;6)]-N-acetyl-alpha-D-galactosaminyl}-L-seryl-[protein] + UDP + H(+). It catalyses the reaction a 3-O-[beta-D-galactosyl-(1-&gt;3)-N-acetyl-alpha-D-galactosaminyl]-L-threonyl-[protein] + UDP-N-acetyl-alpha-D-glucosamine = a 3-O-{beta-D-galactosyl-(1-&gt;3)-[N-acetyl-beta-D-glucosaminyl-(1-&gt;6)]-N-acetyl-alpha-D-galactosaminyl}-L-threonyl-[protein] + UDP + H(+). It carries out the reaction a beta-D-Gal-(1-&gt;4)-beta-D-GlcNAc-(1-&gt;3)-beta-D-Gal-(1-&gt;4)-beta-D-GlcNAc derivative + UDP-N-acetyl-alpha-D-glucosamine = a beta-D-Gal-(1-&gt;4)-beta-D-GlcNAc-(1-&gt;3)-[beta-D-GlcNAc-(1-&gt;6)]-beta-D-Gal-(1-&gt;4)-N-acetyl-beta-D-glucosaminyl derivative + UDP + H(+). The enzyme catalyses 3-O-[N-acetyl-beta-D-glucosaminyl-(1-&gt;3)-N-acetyl-alpha-D-galactosaminyl]-L-seryl-[protein] + UDP-N-acetyl-alpha-D-glucosamine = 3-O-[N-acetyl-beta-D-glucosaminyl-(1-&gt;3)-[N-acetyl-beta-D-glucosaminyl-(1-&gt;6)]-N-acetyl-alpha-D-galactosaminyl]-L-seryl-[protein] + UDP + H(+). The catalysed reaction is a 3-O-[N-acetyl-beta-D-glucosaminyl-(1-&gt;3)-N-acetyl-alpha-D-galactosaminyl]-L-threonyl-[protein] + UDP-N-acetyl-alpha-D-glucosamine = 3-O-[N-acetyl-beta-D-glucosaminyl-(1-&gt;3)-[N-acetyl-beta-D-glucosaminyl-(1-&gt;6)]-N-acetyl-alpha-D-galactosaminyl]-L-threonyl-[protein] + UDP + H(+). It participates in protein modification; protein glycosylation. Its function is as follows. Glycosyltransferase that can synthesize all known mucin beta 6 N-acetylglucosaminides. Mediates core 2 and core 4 O-glycan branching, 2 important steps in mucin-type biosynthesis. Also has I-branching enzyme activity by converting linear into branched poly-N-acetyllactosaminoglycans, leading to introduce the blood group I antigen during embryonic development. The protein is Beta-1,3-galactosyl-O-glycosyl-glycoprotein beta-1,6-N-acetylglucosaminyltransferase 3 (GCNT3) of Homo sapiens (Human).